We begin with the raw amino-acid sequence, 469 residues long: 3-isopropylmalate dehydratase large subunit (469 aa).

[4Fe-4S] cluster-binding residues include Cys347, Cys410, and Cys413.

It belongs to the aconitase/IPM isomerase family. LeuC type 1 subfamily. As to quaternary structure, heterodimer of LeuC and LeuD. [4Fe-4S] cluster is required as a cofactor.

It catalyses the reaction (2R,3S)-3-isopropylmalate = (2S)-2-isopropylmalate. The protein operates within amino-acid biosynthesis; L-leucine biosynthesis; L-leucine from 3-methyl-2-oxobutanoate: step 2/4. Catalyzes the isomerization between 2-isopropylmalate and 3-isopropylmalate, via the formation of 2-isopropylmaleate. The polypeptide is 3-isopropylmalate dehydratase large subunit (Burkholderia pseudomallei (strain 1106a)).